Here is a 142-residue protein sequence, read N- to C-terminus: MEPTKIVENLYLGNIQNGIRHSNYGFDKIINLTRFNNQYGIPTVWINIDDSESSDLYSHLQKVTTLIHDSIENGNKVLVHCQAGISRSATVVIAYIMRSKRYSLQDAFNFVKKKRSIIFPNAGFIKQLAQFERWLNSTNSYF.

The region spanning 2–137 is the Tyrosine-protein phosphatase domain; sequence EPTKIVENLY…LAQFERWLNS (136 aa). Catalysis depends on Cys81, which acts as the Phosphocysteine intermediate.

This sequence belongs to the protein-tyrosine phosphatase family.

This chain is Putative tyrosine phosphatase 123R, found in Invertebrate iridescent virus 6 (IIV-6).